Reading from the N-terminus, the 98-residue chain is Transcription elongation factor A protein-like 7 (98 aa).

A compositionally biased stretch (basic and acidic residues) spans 1-24; it reads MQRSCNEKEGKPKCSEPKREEEHP. A disordered region spans residues 1–31; the sequence is MQRSCNEKEGKPKCSEPKREEEHPYGAFEGQ. Residues 59-89 adopt a coiled-coil conformation; the sequence is GEEMTGEEEEMERCLEEIRSLRKKFRALHSN.

The protein belongs to the TFS-II family. TFA subfamily.

It is found in the nucleus. Plays a role in the negative regulation of NF-kappa-B signaling at the basal level by modulating transcriptional activity of NF-kappa-B on its target gene promoters. Associates with cyclin D1 promoter containing Myc E-box sequence and transcriptionally represses cyclin D1 expression. Regulates telomerase reverse transcriptase expression and telomerase activity in both ALT (alternative lengthening of telomeres)and telomerase-positive cell lines. This Rattus norvegicus (Rat) protein is Transcription elongation factor A protein-like 7 (Tceal7).